The following is a 248-amino-acid chain: ATP synthase subunit a, chloroplastic (248 aa).

Transmembrane regions (helical) follow at residues 38–58, 96–116, 135–155, 200–220, and 221–241; these read QVLL…VLTV, VPFI…GALV, INTT…AGLA, LVVA…VMLL, and GLFT…AYIG.

The protein belongs to the ATPase A chain family. F-type ATPases have 2 components, CF(1) - the catalytic core - and CF(0) - the membrane proton channel. CF(1) has five subunits: alpha(3), beta(3), gamma(1), delta(1), epsilon(1). CF(0) has four main subunits: a, b, b' and c.

It localises to the plastid. The protein localises to the chloroplast thylakoid membrane. Key component of the proton channel; it plays a direct role in the translocation of protons across the membrane. This Welwitschia mirabilis (Tree tumbo) protein is ATP synthase subunit a, chloroplastic.